A 30-amino-acid chain; its full sequence is Fimbrial assembly protein, serogroup B1 (30 aa).

This Dichelobacter nodosus (Bacteroides nodosus) protein is Fimbrial assembly protein, serogroup B1 (fimB).